We begin with the raw amino-acid sequence, 638 residues long: 9-cis-epoxycarotenoid dioxygenase NCED1, chloroplastic (638 aa).

The transit peptide at Met1–Val80 directs the protein to the chloroplast. Composition is skewed to low complexity over residues Ala28–Ser37, Ala44–Pro69, and Thr92–Ser102. 2 disordered regions span residues Ala28–Val80 and Thr92–Ala113. Positions 331, 380, 446, and 624 each coordinate Fe cation.

It belongs to the carotenoid oxygenase family. Fe(2+) serves as cofactor.

Its subcellular location is the plastid. The protein localises to the chloroplast. It carries out the reaction a 9-cis-epoxycarotenoid + O2 = a 12'-apo-carotenal + 2-cis,4-trans-xanthoxin. The enzyme catalyses 9-cis-violaxanthin + O2 = (3S,5R,6S)-5,6-epoxy-3-hydroxy-5,6-dihydro-12'-apo-beta-caroten-12'-al + 2-cis,4-trans-xanthoxin. The catalysed reaction is 9'-cis-neoxanthin + O2 = (3S,5R,6R)-3,5-dihydroxy-6,7-didehydro-5,6-dihydro-12'-apo-beta-caroten-12'-al + 2-cis,4-trans-xanthoxin. Has a 11,12(11',12') 9-cis epoxycarotenoid cleavage activity. Catalyzes the first step of abscisic-acid biosynthesis from carotenoids. This is 9-cis-epoxycarotenoid dioxygenase NCED1, chloroplastic from Oryza sativa subsp. japonica (Rice).